The chain runs to 316 residues: tRNA pseudouridine synthase B (316 aa).

Aspartate 38 acts as the Nucleophile in catalysis. In terms of domain architecture, PUA spans 238–312 (YPEVIVKSSA…PVCVLARQAG (75 aa)).

It belongs to the pseudouridine synthase TruB family. Type 1 subfamily.

The catalysed reaction is uridine(55) in tRNA = pseudouridine(55) in tRNA. Functionally, responsible for synthesis of pseudouridine from uracil-55 in the psi GC loop of transfer RNAs. In Pelotomaculum thermopropionicum (strain DSM 13744 / JCM 10971 / SI), this protein is tRNA pseudouridine synthase B.